Here is a 423-residue protein sequence, read N- to C-terminus: Glycine amidinotransferase, mitochondrial (423 aa).

The transit peptide at 1–43 (MLRVRCLRGGSRGAEAVHYIGSRLGGSLTGWVQRTFQSTQAAT) directs the protein to the mitochondrion. Phosphoserine is present on residues Ser46 and Ser49. Asp170 lines the arginine pocket. Catalysis depends on residues Asp254 and His303. Residues Asp305, Arg322, Ser354, and Ser355 each coordinate arginine. Position 385 is an N6-acetyllysine (Lys385). The Amidino-cysteine intermediate role is filled by Cys407.

It belongs to the amidinotransferase family. Homodimer. In terms of tissue distribution, expressed in kidney, brain, gonads, uterus, and embryonic head, chest and abdomen. Maternally expressed in the placenta and yolk sac of embryos.

The protein resides in the mitochondrion inner membrane. It catalyses the reaction L-arginine + glycine = guanidinoacetate + L-ornithine. The catalysed reaction is 4-aminobutanoate + L-arginine = 4-guanidinobutanoate + L-ornithine. The enzyme catalyses beta-alanine + L-arginine = 3-guanidinopropanoate + L-ornithine. It carries out the reaction taurine + L-arginine = taurocyamine + L-ornithine. The protein operates within amine and polyamine biosynthesis; creatine biosynthesis; creatine from L-arginine and glycine: step 1/2. Transamidinase that catalyzes the transfer of the amidino group of L-arginine onto the amino moiety of acceptor metabolites such as glycine, beta-alanine, gamma-aminobutyric acid (GABA) and taurine yielding the corresponding guanidine derivatives. Catalyzes the rate-limiting step of creatine biosynthesis, namely the transfer of the amidino group from L-arginine to glycine to generate guanidinoacetate, which is then methylated by GAMT to form creatine. Provides creatine as a source for ATP generation in tissues with high energy demands, in particular skeletal muscle, heart and brain. This Mus musculus (Mouse) protein is Glycine amidinotransferase, mitochondrial (Gatm).